The primary structure comprises 110 residues: Putative membrane protein insertion efficiency factor (110 aa).

Belongs to the UPF0161 family.

It is found in the cell inner membrane. Could be involved in insertion of integral membrane proteins into the membrane. The chain is Putative membrane protein insertion efficiency factor from Campylobacter hominis (strain ATCC BAA-381 / DSM 21671 / CCUG 45161 / LMG 19568 / NCTC 13146 / CH001A).